The chain runs to 1489 residues: ABC transporter FUM19 (1489 aa).

A run of 10 helical transmembrane segments spans residues 33 to 53 (IIFF…RIFV), 84 to 104 (CFSS…ALSY), 116 to 136 (LLSI…RTLW), 143 to 163 (LEYG…FAVW), 264 to 284 (LLLP…QAFL), 302 to 322 (WGLI…TSLY), 373 to 393 (FLNL…AWFL), 397 to 417 (VGIA…GVSI), 482 to 502 (IASL…MLAA), and 511 to 531 (HKVY…GSIF). The ABC transmembrane type-1 1 domain maps to 272 to 539 (IALIGLSLAQ…IFRSVSPLMS (268 aa)). The 233-residue stretch at 591–823 (VKVIQASFGW…YQSHLQSLCI (233 aa)) folds into the ABC transporter 1 domain. N-linked (GlcNAc...) asparagine glycosylation is found at Asn-612 and Asn-616. 625–632 (GPVGSGKS) serves as a coordination point for ATP. N-linked (GlcNAc...) asparagine glycosylation occurs at Asn-670. A compositionally biased stretch (basic and acidic residues) spans 852-862 (EQTRSSRRGAD). Residues 852 to 874 (EQTRSSRRGADNQETIASGADSS) form a disordered region. Residues 863-874 (NQETIASGADSS) are compositionally biased toward polar residues. The next 6 membrane-spanning stretches (helical) occupy residues 890 to 910 (AVPP…GFLY), 945 to 965 (ILAL…FALI), 977 to 999 (AITR…NYFS), 1031 to 1051 (AASS…LYFV), 1120 to 1140 (WLLF…VALV), and 1149 to 1169 (GFAG…TNVV). The ABC transmembrane type-1 2 domain maps to 902–1187 (SSLSYGFLYS…SMGAVSRLKA (286 aa)). One can recognise an ABC transporter 2 domain in the interval 1214-1485 (IKIDGVSASY…KEGKFRALWE (272 aa)). 1254–1261 (GRTGSGKS) lines the ATP pocket.

Belongs to the ABC transporter superfamily. ABCC family. Conjugate transporter (TC 3.A.1.208) subfamily.

The protein localises to the cell membrane. Functionally, ABC transporter that may provide the dual role of fumonisin export and self-protection by allowing the fungus to evade the harmful effect of its own fumonisin production. Plays a role in the repression of the gene cluster that mediates fumonisin biosynthesis. This chain is ABC transporter FUM19, found in Gibberella moniliformis (strain M3125 / FGSC 7600) (Maize ear and stalk rot fungus).